A 244-amino-acid polypeptide reads, in one-letter code: Eukaryotic translation initiation factor 6 (244 aa).

A phosphoserine; by CK1 mark is found at serine 174 and serine 175.

It belongs to the eIF-6 family. In terms of assembly, monomer. Associates with the 60S ribosomal subunit. Phosphorylation at Ser-174 and Ser-175 promotes nuclear export.

It localises to the cytoplasm. Its subcellular location is the nucleus. It is found in the nucleolus. Functionally, binds to the 60S ribosomal subunit and prevents its association with the 40S ribosomal subunit to form the 80S initiation complex in the cytoplasm. Is also involved in ribosome biogenesis. Associates with pre-60S subunits in the nucleus and is involved in its nuclear export. This is Eukaryotic translation initiation factor 6 (tif6) from Schizosaccharomyces pombe (strain 972 / ATCC 24843) (Fission yeast).